The primary structure comprises 460 residues: Serine--tRNA ligase (460 aa).

Residues 50 to 65 (DRNEVSSKIGELKQAG) are compositionally biased toward basic and acidic residues. Disordered stretches follow at residues 50-71 (DRNEVSSKIGELKQAGDEDAAQ) and 109-129 (PDEDAPVGDSEAENVERRREG). Acidic residues predominate over residues 109-121 (PDEDAPVGDSEAE). Residue 241–243 (TAE) participates in L-serine binding. Residues 272–274 (RRE) and valine 288 contribute to the ATP site. Glutamate 295 contributes to the L-serine binding site. Position 368–371 (368–371 (EVSS)) interacts with ATP. Residue serine 404 coordinates L-serine.

It belongs to the class-II aminoacyl-tRNA synthetase family. Type-1 seryl-tRNA synthetase subfamily. Homodimer. The tRNA molecule binds across the dimer.

It localises to the cytoplasm. It carries out the reaction tRNA(Ser) + L-serine + ATP = L-seryl-tRNA(Ser) + AMP + diphosphate + H(+). It catalyses the reaction tRNA(Sec) + L-serine + ATP = L-seryl-tRNA(Sec) + AMP + diphosphate + H(+). Its pathway is aminoacyl-tRNA biosynthesis; selenocysteinyl-tRNA(Sec) biosynthesis; L-seryl-tRNA(Sec) from L-serine and tRNA(Sec): step 1/1. Catalyzes the attachment of serine to tRNA(Ser). Is also able to aminoacylate tRNA(Sec) with serine, to form the misacylated tRNA L-seryl-tRNA(Sec), which will be further converted into selenocysteinyl-tRNA(Sec). In Halobacterium salinarum (strain ATCC 29341 / DSM 671 / R1), this protein is Serine--tRNA ligase.